Reading from the N-terminus, the 901-residue chain is Viral-enhancing factor (901 aa).

A Peptidase M60 domain is found at 27–330 (HRRTEVGVVL…IFTWLYNPQR (304 aa)). 10 N-linked (GlcNAc...) asparagine; by host glycosylation sites follow: Asn-65, Asn-265, Asn-339, Asn-349, Asn-540, Asn-594, Asn-595, Asn-642, Asn-683, and Asn-698.

In terms of biological role, involved in disruption of the peritrophic membrane and fusion of nucleocapsids with midgut cells. In Trichoplusia ni (Cabbage looper), this protein is Viral-enhancing factor (VEF).